Here is a 179-residue protein sequence, read N- to C-terminus: Large ribosomal subunit protein uL5c (179 aa).

The protein belongs to the universal ribosomal protein uL5 family. As to quaternary structure, part of the 50S ribosomal subunit; contacts the 5S rRNA.

The protein localises to the plastid. It is found in the organellar chromatophore. Functionally, binds 5S rRNA, forms part of the central protuberance of the 50S subunit. In Paulinella chromatophora, this protein is Large ribosomal subunit protein uL5c (rpl5).